The chain runs to 109 residues: Small ribosomal subunit protein uS17 (109 aa).

The protein belongs to the universal ribosomal protein uS17 family. As to quaternary structure, part of the 30S ribosomal subunit.

Its function is as follows. One of the primary rRNA binding proteins, it binds specifically to the 5'-end of 16S ribosomal RNA. The protein is Small ribosomal subunit protein uS17 of Halobacterium salinarum (strain ATCC 29341 / DSM 671 / R1).